The following is a 203-amino-acid chain: Urease accessory protein UreG (203 aa).

11-18 is a binding site for GTP; the sequence is GPVGSGKT.

This sequence belongs to the SIMIBI class G3E GTPase family. UreG subfamily. In terms of assembly, homodimer. UreD, UreF and UreG form a complex that acts as a GTP-hydrolysis-dependent molecular chaperone, activating the urease apoprotein by helping to assemble the nickel containing metallocenter of UreC. The UreE protein probably delivers the nickel.

It localises to the cytoplasm. Facilitates the functional incorporation of the urease nickel metallocenter. This process requires GTP hydrolysis, probably effectuated by UreG. This chain is Urease accessory protein UreG, found in Prochlorococcus marinus (strain MIT 9301).